The primary structure comprises 311 residues: Mycinamicin-resistance protein MyrB (311 aa).

N27, L29, G54, E75, and D98 together coordinate S-adenosyl-L-methionine. A disordered region spans residues 272-311 (PAPAGRSVRARPGSVGPDRSLPPRGLRSGPPRARRRGGGA). Positions 293-302 (PPRGLRSGPP) are enriched in low complexity.

This sequence belongs to the class I-like SAM-binding methyltransferase superfamily. rRNA adenine N(6)-methyltransferase family.

Its function is as follows. Confers resistance to macrolide, lincosamide and streptogramin B antibiotics. This is Mycinamicin-resistance protein MyrB (myrB) from Micromonospora griseorubida.